Consider the following 346-residue polypeptide: Holliday junction branch migration complex subunit RuvB (346 aa).

Residues 1 to 183 (MTEQRIIASS…FGIVQRLEFY (183 aa)) form a large ATPase domain (RuvB-L) region. ATP-binding positions include isoleucine 22, arginine 23, glycine 64, lysine 67, threonine 68, threonine 69, 130–132 (EDF), arginine 173, tyrosine 183, and arginine 220. Residue threonine 68 coordinates Mg(2+). Residues 184–254 (SPQELTRIVI…VAQAAMQMLK (71 aa)) form a small ATPAse domain (RuvB-S) region. The head domain (RuvB-H) stretch occupies residues 257–346 (PEGFDELDRR…PGIGEPGDLF (90 aa)). The DNA site is built by arginine 293, arginine 312, and arginine 317.

Belongs to the RuvB family. Homohexamer. Forms an RuvA(8)-RuvB(12)-Holliday junction (HJ) complex. HJ DNA is sandwiched between 2 RuvA tetramers; dsDNA enters through RuvA and exits via RuvB. An RuvB hexamer assembles on each DNA strand where it exits the tetramer. Each RuvB hexamer is contacted by two RuvA subunits (via domain III) on 2 adjacent RuvB subunits; this complex drives branch migration. In the full resolvosome a probable DNA-RuvA(4)-RuvB(12)-RuvC(2) complex forms which resolves the HJ.

The protein localises to the cytoplasm. The catalysed reaction is ATP + H2O = ADP + phosphate + H(+). The RuvA-RuvB-RuvC complex processes Holliday junction (HJ) DNA during genetic recombination and DNA repair, while the RuvA-RuvB complex plays an important role in the rescue of blocked DNA replication forks via replication fork reversal (RFR). RuvA specifically binds to HJ cruciform DNA, conferring on it an open structure. The RuvB hexamer acts as an ATP-dependent pump, pulling dsDNA into and through the RuvAB complex. RuvB forms 2 homohexamers on either side of HJ DNA bound by 1 or 2 RuvA tetramers; 4 subunits per hexamer contact DNA at a time. Coordinated motions by a converter formed by DNA-disengaged RuvB subunits stimulates ATP hydrolysis and nucleotide exchange. Immobilization of the converter enables RuvB to convert the ATP-contained energy into a lever motion, pulling 2 nucleotides of DNA out of the RuvA tetramer per ATP hydrolyzed, thus driving DNA branch migration. The RuvB motors rotate together with the DNA substrate, which together with the progressing nucleotide cycle form the mechanistic basis for DNA recombination by continuous HJ branch migration. Branch migration allows RuvC to scan DNA until it finds its consensus sequence, where it cleaves and resolves cruciform DNA. In Xanthomonas axonopodis pv. citri (strain 306), this protein is Holliday junction branch migration complex subunit RuvB.